Reading from the N-terminus, the 262-residue chain is Type III pantothenate kinase (262 aa).

7–14 (DIGNTRLK) serves as a coordination point for ATP. Substrate-binding positions include Tyr-96 and 103-106 (GSDR). The active-site Proton acceptor is the Asp-105. Thr-137 contributes to the ATP binding site. Thr-187 is a binding site for substrate.

This sequence belongs to the type III pantothenate kinase family. Homodimer. NH4(+) is required as a cofactor. K(+) serves as cofactor.

It localises to the cytoplasm. It carries out the reaction (R)-pantothenate + ATP = (R)-4'-phosphopantothenate + ADP + H(+). It participates in cofactor biosynthesis; coenzyme A biosynthesis; CoA from (R)-pantothenate: step 1/5. Its function is as follows. Catalyzes the phosphorylation of pantothenate (Pan), the first step in CoA biosynthesis. The protein is Type III pantothenate kinase of Leptothrix cholodnii (strain ATCC 51168 / LMG 8142 / SP-6) (Leptothrix discophora (strain SP-6)).